A 366-amino-acid chain; its full sequence is MSHNTFGHLFRVTTWGESHGVALGCVIDGCPPGITFTLAEIQSYLDKRRPGQSRYTTQRRELDQVEILSGVIVQDDGATLVTTGTPISLLIRNTDQRSKDYGSIVHQYRPGHADYTYDVKYGIRDFQGGGRASARETAARVAAGALARKIVPGLIVRGALIAIGPHNINRDRWDWLEVENNPFFTPDAEMVPVFSDYIDTVRKNGSSVGALVEIVAENVPAGLGAPIYAKLDQDIASSLMSINAVKGVEIGDGFAAACLTGEENADEMRMGSDGKPVFLSNHAGGILGGISSGQPIVARFAVKPTPSILTSRRSIDVDGNDVNVITKGRHDPCVGIRAVPVGEAMIACAIADHYLRHRGQVGRFER.

Residues arginine 48 and arginine 54 each coordinate NADP(+). FMN is bound by residues 131–133, 243–244, glycine 288, 303–307, and arginine 329; these read RAS, NA, and KPTPS.

The protein belongs to the chorismate synthase family. In terms of assembly, homotetramer. FMNH2 serves as cofactor.

It catalyses the reaction 5-O-(1-carboxyvinyl)-3-phosphoshikimate = chorismate + phosphate. The protein operates within metabolic intermediate biosynthesis; chorismate biosynthesis; chorismate from D-erythrose 4-phosphate and phosphoenolpyruvate: step 7/7. Functionally, catalyzes the anti-1,4-elimination of the C-3 phosphate and the C-6 proR hydrogen from 5-enolpyruvylshikimate-3-phosphate (EPSP) to yield chorismate, which is the branch point compound that serves as the starting substrate for the three terminal pathways of aromatic amino acid biosynthesis. This reaction introduces a second double bond into the aromatic ring system. In Bartonella quintana (strain Toulouse) (Rochalimaea quintana), this protein is Chorismate synthase.